A 213-amino-acid polypeptide reads, in one-letter code: Mite allergen Der f 7 (213 aa).

A signal peptide spans 1–17; the sequence is MMKFLLIAAVAFVAVSA. Asn-151 carries an N-linked (GlcNAc...) asparagine glycan.

It belongs to the mite group 7 allergen family.

It is found in the secreted. The polypeptide is Mite allergen Der f 7 (DERF7) (Dermatophagoides farinae (American house dust mite)).